Reading from the N-terminus, the 426-residue chain is Histidine--tRNA ligase (426 aa).

The protein belongs to the class-II aminoacyl-tRNA synthetase family. Homodimer.

It localises to the cytoplasm. The enzyme catalyses tRNA(His) + L-histidine + ATP = L-histidyl-tRNA(His) + AMP + diphosphate + H(+). This is Histidine--tRNA ligase from Legionella pneumophila (strain Paris).